A 358-amino-acid polypeptide reads, in one-letter code: Aerobic magnesium-protoporphyrin IX monomethyl ester [oxidative] cyclase (358 aa).

Belongs to the AcsF family. It depends on Fe cation as a cofactor.

It carries out the reaction Mg-protoporphyrin IX 13-monomethyl ester + 3 NADPH + 3 O2 + 2 H(+) = 3,8-divinyl protochlorophyllide a + 3 NADP(+) + 5 H2O. The protein operates within porphyrin-containing compound metabolism; chlorophyll biosynthesis. Functionally, catalyzes the formation of the isocyclic ring in chlorophyll biosynthesis in aerobic conditions. Mediates the cyclase reaction, which results in the formation of divinylprotochlorophyllide (Pchlide) characteristic of all chlorophylls from magnesium-protoporphyrin IX 13-monomethyl ester (MgPMME). The sequence is that of Aerobic magnesium-protoporphyrin IX monomethyl ester [oxidative] cyclase from Rubrivivax gelatinosus (Rhodocyclus gelatinosus).